Reading from the N-terminus, the 855-residue chain is Alanine--tRNA ligase (855 aa).

The Zn(2+) site is built by histidine 555, histidine 559, cysteine 657, and histidine 661.

This sequence belongs to the class-II aminoacyl-tRNA synthetase family. Requires Zn(2+) as cofactor.

Its subcellular location is the cytoplasm. The enzyme catalyses tRNA(Ala) + L-alanine + ATP = L-alanyl-tRNA(Ala) + AMP + diphosphate. Catalyzes the attachment of alanine to tRNA(Ala) in a two-step reaction: alanine is first activated by ATP to form Ala-AMP and then transferred to the acceptor end of tRNA(Ala). Also edits incorrectly charged Ser-tRNA(Ala) and Gly-tRNA(Ala) via its editing domain. In Wolinella succinogenes (strain ATCC 29543 / DSM 1740 / CCUG 13145 / JCM 31913 / LMG 7466 / NCTC 11488 / FDC 602W) (Vibrio succinogenes), this protein is Alanine--tRNA ligase.